Reading from the N-terminus, the 255-residue chain is ATP synthase subunit a 2 (255 aa).

5 helical membrane passes run 26-46, 86-106, 131-151, 205-225, and 230-250; these read SINIDSMIMVWMVGLLFIGVF, LIGPLALTIFVWVFLMNSIDL, DVNVPVSMALGVFILIIGYTL, MIFILIALMPWWMQWALSVPW, and ILIVFLQAFIFMVLTIVYLAM.

The protein belongs to the ATPase A chain family. As to quaternary structure, F-type ATPases have 2 components, CF(1) - the catalytic core - and CF(0) - the membrane proton channel. CF(1) has five subunits: alpha(3), beta(3), gamma(1), delta(1), epsilon(1). CF(0) has three main subunits: a(1), b(2) and c(9-12). The alpha and beta chains form an alternating ring which encloses part of the gamma chain. CF(1) is attached to CF(0) by a central stalk formed by the gamma and epsilon chains, while a peripheral stalk is formed by the delta and b chains.

It is found in the cell inner membrane. In terms of biological role, key component of the proton channel; it plays a direct role in the translocation of protons across the membrane. This is ATP synthase subunit a 2 from Photobacterium profundum (strain SS9).